The primary structure comprises 349 residues: Insulin gene enhancer protein ISL-1 (349 aa).

LIM zinc-binding domains follow at residues 17-70 and 79-133; these read CVGC…CKRD and CAKC…RADH. The homeobox DNA-binding region spans 181 to 240; sequence TTRVRTVLNEKQLHTLRTCYAANPRPDALMKEQLVEMTGLSPRVIRVWFQNKRCKDKKRS. The segment at 312 to 349 is disordered; it reads VNFSEGGPGSNSTGSEVASMSSQLPDTPNSMVASPIEA. The segment covering 321–343 has biased composition (polar residues); it reads SNSTGSEVASMSSQLPDTPNSMV.

It is found in the nucleus. Functionally, acts as a transcriptional regulator. Recognizes and binds to the consensus octamer binding site 5'-ATAATTAA-3' in promoter of target genes. Plays a fundamental role in the gene regulatory network essential for retinal ganglion cell (RGC) differentiation. Binds to insulin gene enhancer sequences. Defines subclasses of motoneurons that segregate into columns in the spinal cord and select distinct axon pathways. Acts in conjunction with LHX1, LHX3 and ISL2. Binds to insulin gene enhancer sequences. Essential for heart development. The chain is Insulin gene enhancer protein ISL-1 (ISL1) from Gallus gallus (Chicken).